An 82-amino-acid polypeptide reads, in one-letter code: U16-lycotoxin-Ls1a (82 aa).

An N-terminal signal peptide occupies residues 1–22 (MSPKVQALLLLVGLITFLAVHA). Positions 23-34 (EEELSETVESER) are excised as a propeptide. Cystine bridges form between Cys36-Cys51, Cys43-Cys56, Cys50-Cys67, and Cys58-Cys65.

The protein belongs to the neurotoxin 02 (plectoxin) family. 04 (U16-lycotoxin) subfamily. Expressed by the venom gland.

Its subcellular location is the secreted. The protein is U16-lycotoxin-Ls1a of Lycosa singoriensis (Wolf spider).